A 236-amino-acid polypeptide reads, in one-letter code: tRNA (guanine-N(7)-)-methyltransferase (236 aa).

D35, E60, N87, and D113 together coordinate S-adenosyl-L-methionine. D113 is an active-site residue. Substrate-binding residues include K117 and D149.

Belongs to the class I-like SAM-binding methyltransferase superfamily. TrmB family.

It carries out the reaction guanosine(46) in tRNA + S-adenosyl-L-methionine = N(7)-methylguanosine(46) in tRNA + S-adenosyl-L-homocysteine. The protein operates within tRNA modification; N(7)-methylguanine-tRNA biosynthesis. In terms of biological role, catalyzes the formation of N(7)-methylguanine at position 46 (m7G46) in tRNA. The sequence is that of tRNA (guanine-N(7)-)-methyltransferase from Prochlorococcus marinus (strain MIT 9313).